Consider the following 376-residue polypeptide: Alcohol dehydrogenase 1 (376 aa).

Residue Ser2 is modified to N-acetylserine. The Zn(2+) site is built by Cys47, His68, Cys98, Cys101, Cys104, Cys112, and Cys176. NAD(+)-binding positions include 201 to 206 (GLGGVG), Asp225, Lys230, 294 to 296 (VGV), and Arg371.

The protein belongs to the zinc-containing alcohol dehydrogenase family. Class-I subfamily. In terms of assembly, homodimer. It depends on Zn(2+) as a cofactor.

The protein resides in the cytoplasm. It catalyses the reaction a primary alcohol + NAD(+) = an aldehyde + NADH + H(+). The enzyme catalyses a secondary alcohol + NAD(+) = a ketone + NADH + H(+). The polypeptide is Alcohol dehydrogenase 1 (ADH1) (Gallus gallus (Chicken)).